We begin with the raw amino-acid sequence, 277 residues long: Mannosyl-3-phosphoglycerate phosphatase (277 aa).

Catalysis depends on D13, which acts as the Nucleophile. Mg(2+) is bound by residues D13, D15, and D219.

It belongs to the HAD-like hydrolase superfamily. MPGP family. Requires Mg(2+) as cofactor.

It localises to the cytoplasm. The catalysed reaction is 2-O-(alpha-D-mannosyl)-3-phosphoglycerate + H2O = (2R)-2-O-(alpha-D-mannosyl)-glycerate + phosphate. It participates in carbohydrate biosynthesis; 2-(alpha-D-mannosyl)-D-glycerate biosynthesis; 2-(alpha-D-mannosyl)-D-glycerate from GDP-alpha-D-mannose (MPG route): step 2/2. Its function is as follows. Hydrolyzes mannosyl-3-phosphoglycerate (MPG) to form the osmolyte mannosylglycerate (MG). This chain is Mannosyl-3-phosphoglycerate phosphatase, found in Aeropyrum pernix (strain ATCC 700893 / DSM 11879 / JCM 9820 / NBRC 100138 / K1).